We begin with the raw amino-acid sequence, 162 residues long: Calcium-binding protein 4b (162 aa).

EF-hand domains are found at residues glutamate 10–proline 45, asparagine 46–isoleucine 81, threonine 85–asparagine 120, and glutamine 123–isoleucine 158. The Ca(2+) site is built by aspartate 23, asparagine 25, aspartate 27, glutamine 29, glutamate 34, aspartate 59, aspartate 61, aspartate 63, lysine 65, and glutamate 70. Aspartate 136, aspartate 138, aspartate 140, cysteine 142, and glutamate 147 together coordinate Ca(2+).

The protein is Calcium-binding protein 4b (cbpD2) of Dictyostelium discoideum (Social amoeba).